The following is a 1046-amino-acid chain: Toluene efflux pump membrane transporter TtgE (1046 aa).

A run of 12 helical transmembrane segments spans residues 10–30 (IFAW…LTKM), 339–359 (SVVH…FLFL), 370–390 (LAVP…GISI), 392–412 (VLTM…AIVV), 440–460 (GALV…AFFG), 470–490 (FAVT…IFTP), 542–562 (LIFA…PKAF), 871–891 (APML…ALYE), 895–915 (VPMS…LATL), 927–947 (VGLM…IEFA), 973–993 (IIMT…ATGA), and 1008–1028 (GMIT…VVVV).

This sequence belongs to the resistance-nodulation-cell division (RND) (TC 2.A.6) family.

The protein localises to the cell inner membrane. In terms of biological role, the inner membrane transporter component of an inducible organic solvent efflux pump. Involved in export of toluene and styrene but not of m-xylene, propylbenzene or ethylbenzene. Is not involved in antibiotic or AMP efflux. The polypeptide is Toluene efflux pump membrane transporter TtgE (ttgE) (Pseudomonas putida (strain DOT-T1E)).